Reading from the N-terminus, the 504-residue chain is 26S proteasome non-ATPase regulatory subunit 3 (504 aa).

The PCI domain maps to 254–433 (ARYMYYQGRI…RDGPRYMQSS (180 aa)).

Belongs to the proteasome subunit S3 family. As to quaternary structure, the 26S proteasome is composed of a core protease, known as the 20S proteasome, capped at one or both ends by the 19S regulatory complex (RC). The RC is composed of at least 18 different subunits in two subcomplexes, the base and the lid, which form the portions proximal and distal to the 20S proteolytic core, respectively.

In terms of biological role, acts as a regulatory subunit of the 26 proteasome which is involved in the ATP-dependent degradation of ubiquitinated proteins. In Caenorhabditis elegans, this protein is 26S proteasome non-ATPase regulatory subunit 3 (rpn-3).